A 60-amino-acid polypeptide reads, in one-letter code: Hemocyte defensin Cg-Defh2 (60 aa).

The first 17 residues, 1–17 (LLTLAVLLMVSADMAFA), serve as a signal peptide directing secretion. Residues Phe-19, Gly-20, and Cys-21 each contribute to the beta-D-GlcNAc-(1-&gt;4)-Mur2Ac(oyl-L-Ala-gamma-D-Glu-L-Lys-D-Ala-D-Ala)-di-trans,octa-cis-undecaprenyl diphosphate site. 4 disulfides stabilise this stretch: Cys-21-Cys-42, Cys-28-Cys-51, Cys-32-Cys-53, and Cys-37-Cys-56. The segment at 22–25 (PGDQ) is binds to membrane interface. Residue His-31 coordinates beta-D-GlcNAc-(1-&gt;4)-Mur2Ac(oyl-L-Ala-gamma-D-Glu-L-Lys-D-Ala-D-Ala)-di-trans,octa-cis-undecaprenyl diphosphate. Residues 43 to 49 (DAVTLWL) are binds to membrane interface. A beta-D-GlcNAc-(1-&gt;4)-Mur2Ac(oyl-L-Ala-gamma-D-Glu-L-Lys-D-Ala-D-Ala)-di-trans,octa-cis-undecaprenyl diphosphate-binding site is contributed by Cys-51.

This sequence belongs to the invertebrate defensin family. Expressed in hemocytes.

Its subcellular location is the secreted. The protein resides in the target cell membrane. Its function is as follows. Antibacterial peptide mostly active against Gram-positive bacteria. It acts by selectively inhibiting peptidoglycan biosynthesis through complex formation with the cell wall precursor lipid II (1:1 molar ratio) thus inhibiting cell wall synthesis. It does not disrupt cell membranes. Is noticeably more potent than Cg-Defh1. The sequence is that of Hemocyte defensin Cg-Defh2 from Magallana gigas (Pacific oyster).